The following is a 454-amino-acid chain: Macrophage scavenger receptor types I and II (454 aa).

Positions 1–22 (MAQWDSFTDQQEDTDSCSESVK) are disordered. Residues 1 to 50 (MAQWDSFTDQQEDTDSCSESVKFDARSNTALLPPNPKNGPPLQEKLKSFK) are Cytoplasmic-facing. Serine 27 bears the Phosphoserine mark. The chain crosses the membrane as a helical; Signal-anchor for type II membrane protein span at residues 51–73 (AALIALYLLVFAVLIPIIAIMAA). The spacer stretch occupies residues 74–109 (QLLKWEMKNCTVGSINANSVSSSLLGRGNDSEHEVR). The Extracellular segment spans residues 74–454 (QLLKWEMKNC…GEDAGVTCTL (381 aa)). 7 N-linked (GlcNAc...) asparagine glycosylation sites follow: asparagine 82, asparagine 102, asparagine 143, asparagine 184, asparagine 221, asparagine 249, and asparagine 267. Positions 199-256 (VKFQENTLKGQEEISKLKERVHNASAEIMSMKEEQVHLEQEIKREVKVLNNITNDLRL) form a coiled coil. A disordered region spans residues 267-347 (NITLIQGPPG…KGEKGSGSIL (81 aa)). The Collagen-like domain maps to 273–344 (GPPGPPGEKG…KGQKGEKGSG (72 aa)). Residues 353 to 453 (VRLVGGRGPH…HGEDAGVTCT (101 aa)) enclose the SRCR domain. 3 disulfide bridges follow: cysteine 378-cysteine 442, cysteine 391-cysteine 452, and cysteine 422-cysteine 432.

Homotrimer. Interacts with MYO18A.

It localises to the membrane. In terms of biological role, membrane glycoproteins implicated in the pathologic deposition of cholesterol in arterial walls during atherogenesis. Two types of receptor subunits exist. These receptors mediate the endocytosis of a diverse group of macromolecules, including modified low density lipoproteins (LDL). The protein is Macrophage scavenger receptor types I and II (MSR1) of Oryctolagus cuniculus (Rabbit).